The sequence spans 1200 residues: SSHNPGQSFTTGTTTTVVYTATDAFANVGQCAFTITVTATDTTPPVVTVSSSTITRQVEVGTPGVNVFFTEPTATDNSGQAILISRTNQPGDFFSVGQTIVTYTFQDPSGNPASGTVTINVIEVDTTPPVVTVPSTTITRQVEVGSSGVNVFYTEPTATDNSGQAILTSRTNQPGDFFPVGQTTVTYTFQDPSGNPASGTVTINVIEVDTTPPVVTVPSTTITRQVEVGSSGVNVFYTEPTATDNSGQAILTSRTNQPGDFFPVGQTTVTYTFSQDPSGNPASATVTINVIEVDTTPPVVTVPSTTITRQVEIGTPGVNVFYTEPTATDNSGIANLVSRTNQPGDFFPVGQTDVTYTFQDPSGNPSSGTVTINVVEVDTTSPVITVPSNTITREVELGTPGVNVFYTEPTATDNSGIANLVSRTNQPGDFFNVGQTVVTYTFQDPSGNPASGTVTINVVEVDTTPPQVFVTTGEVVRTAPFGSSGVNVFFTEPVAIDNSGTADLVSQTAQPGDFFPIGSTVVTYRYRDASGNEATGTFTVTVEEMVDTTPPTVTVSGGNIVRTVELGQSRLSVIYTEPTATDNSGEANLVSRTAQPGDLFPVGTTTVEYVYQDPAGNEGRGQFTVTVIAVDTTPPSVNCPNNVFQEVELGTSSAPVFFTEPTAFDISGQANLVTRTAAPGDSFPVGTTSVSYIFSDNSGNEAEPCTFTVTISAVDTTPPTVNCINNVAQTVQLGTGSTQVFFTEPTAFDISGQTSLVTRTSAPGDSFPVGTTSVTYIFTDASGNNAQPCTFNVVINAVDTTPPTVNCANNIAQTIELGSTSAVVNYAEPSATDISGTAFLVSRSSSPGDSFPIGSTTVTYIFSDQSGNEAPPCVFTVTIGTVDTMMPMFTSCPNNIVQSVELGVPGTVISWTTPTANDAAGIASIVSNLQPGSFFTVGESATVTYVATDNSGLTDNSCSFTVTVFAVDTTPPSVVCTNNVFQTVELGTNPVQVFYTEPTASDISGQANLVSRTNVPGDSFPVGTSTVTYVFADNSGNTADACSFTITVTAQDTTPPTVNCITNIVRTVELGTSSVQVFYNEPTASDLGQASLVSRTAQPGDNFPVGVNPVTYVFGDNSGNQADPCTFTITVNTQDTTPPTVTCISDITRVVELGTTSVGISYTEPTATDISGTATLDSRSHTPGQNFPVGSTVVSYFFSD.

HYR domains lie at 1–39 (SSHN…TVTA), 40–123 (TDTT…NVIE), 124–207 (VDTT…NVIE), 208–292 (VDTT…NVIE), 293–376 (VDTT…NVVE), 377–460 (VDTT…NVVE), 461–544 (VDTT…TVEE), 546–629 (VDTT…TVIA), 630–713 (VDTT…TISA), 714–797 (VDTT…VINA), 798–881 (VDTT…TIGT), 882–966 (VDTM…TVFA), 967–1050 (VDTT…TVTA), 1051–1133 (QDTT…TVNT), and 1134–1200 (QDTT…FFSD).

In terms of assembly, homooligomer in presence of calcium. In terms of processing, glycosylated.

It localises to the secreted. Its subcellular location is the extracellular space. The protein localises to the extracellular matrix. Major constituent of the hyaline layer. The hyaline layer of echinoderm embryos is an extraembryonic matrix that functions as a substrate for cell adhesion through early development. In Strongylocentrotus purpuratus (Purple sea urchin), this protein is Hyalin.